A 370-amino-acid polypeptide reads, in one-letter code: Small ribosomal subunit biogenesis GTPase RsgA (370 aa).

Residues 111-270 form the CP-type G domain; that stretch reads RSEGQILAAN…LIDTPGLRGV (160 aa). Residues 158–161 and 212–220 contribute to the GTP site; these read TKAD and GQSGAGKST. Positions 293, 298, 300, and 306 each coordinate Zn(2+).

It belongs to the TRAFAC class YlqF/YawG GTPase family. RsgA subfamily. In terms of assembly, monomer. Associates with 30S ribosomal subunit, binds 16S rRNA. Requires Zn(2+) as cofactor.

The protein localises to the cytoplasm. One of several proteins that assist in the late maturation steps of the functional core of the 30S ribosomal subunit. Helps release RbfA from mature subunits. May play a role in the assembly of ribosomal proteins into the subunit. Circularly permuted GTPase that catalyzes slow GTP hydrolysis, GTPase activity is stimulated by the 30S ribosomal subunit. The chain is Small ribosomal subunit biogenesis GTPase RsgA from Streptomyces avermitilis (strain ATCC 31267 / DSM 46492 / JCM 5070 / NBRC 14893 / NCIMB 12804 / NRRL 8165 / MA-4680).